The chain runs to 248 residues: Sulfur carrier protein FdhD (248 aa).

Cysteine 99 acts as the Cysteine persulfide intermediate in catalysis. 232–237 (FVRGKR) lines the Mo-bis(molybdopterin guanine dinucleotide) pocket.

It belongs to the FdhD family.

Its subcellular location is the cytoplasm. Its function is as follows. Required for formate dehydrogenase (FDH) activity. Acts as a sulfur carrier protein that transfers sulfur from IscS to the molybdenum cofactor prior to its insertion into FDH. The protein is Sulfur carrier protein FdhD of Methanothermobacter thermautotrophicus (strain ATCC 29096 / DSM 1053 / JCM 10044 / NBRC 100330 / Delta H) (Methanobacterium thermoautotrophicum).